The sequence spans 370 residues: Peptide chain release factor 1 (370 aa).

Position 239 is an N5-methylglutamine (glutamine 239).

It belongs to the prokaryotic/mitochondrial release factor family. In terms of processing, methylated by PrmC. Methylation increases the termination efficiency of RF1.

It is found in the cytoplasm. Peptide chain release factor 1 directs the termination of translation in response to the peptide chain termination codons UAG and UAA. The polypeptide is Peptide chain release factor 1 (Bacteroides thetaiotaomicron (strain ATCC 29148 / DSM 2079 / JCM 5827 / CCUG 10774 / NCTC 10582 / VPI-5482 / E50)).